Here is a 303-residue protein sequence, read N- to C-terminus: tRNA (guanine-N(7)-)-methyltransferase (303 aa).

The disordered stretch occupies residues 1–64 (MPKPHQVQVI…STSDKISLPR (64 aa)). A compositionally biased stretch (basic and acidic residues) spans 10-38 (IKDRETQLREQQEAESKRRTYRDVKEETR). S-adenosyl-L-methionine contacts are provided by residues Gly-118, 141 to 142 (EI), 177 to 178 (NA), and Cys-197. Asp-200 is an active-site residue. 275–277 (TEE) is a binding site for S-adenosyl-L-methionine.

The protein belongs to the class I-like SAM-binding methyltransferase superfamily. TrmB family. Forms a complex with TRM82.

It is found in the nucleus. The enzyme catalyses guanosine(46) in tRNA + S-adenosyl-L-methionine = N(7)-methylguanosine(46) in tRNA + S-adenosyl-L-homocysteine. The protein operates within tRNA modification; N(7)-methylguanine-tRNA biosynthesis. Its function is as follows. Catalyzes the formation of N(7)-methylguanine at position 46 (m7G46) in tRNA. In Scheffersomyces stipitis (strain ATCC 58785 / CBS 6054 / NBRC 10063 / NRRL Y-11545) (Yeast), this protein is tRNA (guanine-N(7)-)-methyltransferase.